The chain runs to 344 residues: Thioredoxin domain-containing protein 15 (344 aa).

Residues 1–20 (MQLLCWWQVLLWVLGLPAHG) form the signal peptide. The Extracellular segment spans residues 21–305 (LEVAEDSGHP…GPLPSTLIKT (285 aa)). 2 disordered regions span residues 55–119 (DHRD…FGLQ) and 136–156 (GVTE…SLKS). Residues 88–97 (EDQRSPEAHD) are compositionally biased toward basic and acidic residues. Residues 163-280 (ERNVTGLENF…LKIFIFNQTG (118 aa)) form the Thioredoxin domain. Asn171, Asn178, Asn190, and Asn277 each carry an N-linked (GlcNAc...) asparagine glycan. Residues 306 to 326 (VDWLLVFSLFFLISFIMYATI) form a helical membrane-spanning segment. Residues 327-344 (RTESIRWLIPGQEQEHAE) are Cytoplasmic-facing.

It is found in the cell projection. Its subcellular location is the cilium membrane. In terms of biological role, acts as a positive regulator of ciliary hedgehog signaling. Required for cilia biogenesis. This Mus musculus (Mouse) protein is Thioredoxin domain-containing protein 15 (Txndc15).